The chain runs to 73 residues: MAKKDGVIEIEGGVVEALPNAMFRVELSNGHKVLAHISGKMRQHYIRILPEDRVIVELSPYDLTRGRIVYRYK.

Residues 1–73 (MAKKDGVIEI…TRGRIVYRYK (73 aa)) form the S1-like domain.

It belongs to the IF-1 family. In terms of assembly, component of the 30S ribosomal translation pre-initiation complex which assembles on the 30S ribosome in the order IF-2 and IF-3, IF-1 and N-formylmethionyl-tRNA(fMet); mRNA recruitment can occur at any time during PIC assembly.

It is found in the cytoplasm. One of the essential components for the initiation of protein synthesis. Stabilizes the binding of IF-2 and IF-3 on the 30S subunit to which N-formylmethionyl-tRNA(fMet) subsequently binds. Helps modulate mRNA selection, yielding the 30S pre-initiation complex (PIC). Upon addition of the 50S ribosomal subunit IF-1, IF-2 and IF-3 are released leaving the mature 70S translation initiation complex. The chain is Translation initiation factor IF-1 from Clavibacter michiganensis subsp. michiganensis (strain NCPPB 382).